Consider the following 447-residue polypeptide: Putative branched-chain amino acid carrier protein SAB1263c (447 aa).

The next 12 helical transmembrane spans lie at 6-26, 40-60, 74-94, 114-134, 143-163, 193-213, 229-249, 290-310, 326-346, 350-370, 382-402, and 417-437; these read WVIG…IFPP, ILAF…VGAL, PKFS…LFAI, SSIA…YICL, IGSL…IKGY, GYLT…VNAV, LTAG…LGYI, LLGI…IGAV, FVLV…NAVI, IPVL…ILIA, IPVI…LGWL, and LEWF…GIFV.

Belongs to the branched chain amino acid transporter family.

It is found in the cell membrane. In terms of biological role, component of the transport system for branched-chain amino acids (leucine, isoleucine and valine), which is coupled to a proton motive force (Potential). Contributes to NaCl tolerance. The sequence is that of Putative branched-chain amino acid carrier protein SAB1263c from Staphylococcus aureus (strain bovine RF122 / ET3-1).